The primary structure comprises 85 residues: Alpha-toxin BmalphaTx47 (85 aa).

Positions 1–19 are cleaved as a signal peptide; the sequence is MNYLIVISFALLLMTGVQS. An LCN-type CS-alpha/beta domain is found at 21-83; that stretch reads RDAYIADSEN…VPIRISGSCR (63 aa). Cystine bridges form between Cys31–Cys82, Cys35–Cys55, Cys41–Cys65, and Cys45–Cys67.

Belongs to the long (4 C-C) scorpion toxin superfamily. Sodium channel inhibitor family. Alpha subfamily. Expressed by the venom gland.

The protein localises to the secreted. Functionally, alpha toxins bind voltage-independently at site-3 of sodium channels (Nav) and inhibit the inactivation of the activated channels, thereby blocking neuronal transmission. This toxin expressed with the pET-14b vector has low inhibitory activity on sodium channels (11.33% on rNav1.2/SCN2A, 15.96% on mNav1.4/SCN4A and 5.04% on hNav1.5/SCN5A). When expressed with the pET-28a vector, this toxin has higher inhibitory activities (44.12% on rNav1.2/SCN2A, 25.40% on mNav1.4/SCN4A and 65.34% on hNav1.5/SCN5A). In Olivierus martensii (Manchurian scorpion), this protein is Alpha-toxin BmalphaTx47.